Reading from the N-terminus, the 204-residue chain is Methylthioribulose-1-phosphate dehydratase (204 aa).

Zn(2+)-binding residues include histidine 94 and histidine 96.

This sequence belongs to the aldolase class II family. MtnB subfamily. The cofactor is Zn(2+).

The enzyme catalyses 5-(methylsulfanyl)-D-ribulose 1-phosphate = 5-methylsulfanyl-2,3-dioxopentyl phosphate + H2O. Its pathway is amino-acid biosynthesis; L-methionine biosynthesis via salvage pathway; L-methionine from S-methyl-5-thio-alpha-D-ribose 1-phosphate: step 2/6. In terms of biological role, catalyzes the dehydration of methylthioribulose-1-phosphate (MTRu-1-P) into 2,3-diketo-5-methylthiopentyl-1-phosphate (DK-MTP-1-P). The chain is Methylthioribulose-1-phosphate dehydratase from Pseudomonas syringae pv. tomato (strain ATCC BAA-871 / DC3000).